A 296-amino-acid polypeptide reads, in one-letter code: ATP phosphoribosyltransferase (296 aa).

Belongs to the ATP phosphoribosyltransferase family. Long subfamily. Mg(2+) serves as cofactor.

It is found in the cytoplasm. It catalyses the reaction 1-(5-phospho-beta-D-ribosyl)-ATP + diphosphate = 5-phospho-alpha-D-ribose 1-diphosphate + ATP. The protein operates within amino-acid biosynthesis; L-histidine biosynthesis; L-histidine from 5-phospho-alpha-D-ribose 1-diphosphate: step 1/9. Feedback inhibited by histidine. In terms of biological role, catalyzes the condensation of ATP and 5-phosphoribose 1-diphosphate to form N'-(5'-phosphoribosyl)-ATP (PR-ATP). Has a crucial role in the pathway because the rate of histidine biosynthesis seems to be controlled primarily by regulation of HisG enzymatic activity. The chain is ATP phosphoribosyltransferase from Halorubrum lacusprofundi (strain ATCC 49239 / DSM 5036 / JCM 8891 / ACAM 34).